A 483-amino-acid polypeptide reads, in one-letter code: Probable Xaa-Pro aminopeptidase MCYG_06503 (483 aa).

Mn(2+)-binding residues include aspartate 233, aspartate 244, glutamate 409, and glutamate 453.

This sequence belongs to the peptidase M24B family. Requires Mn(2+) as cofactor.

It catalyses the reaction Release of any N-terminal amino acid, including proline, that is linked to proline, even from a dipeptide or tripeptide.. Functionally, catalyzes the removal of a penultimate prolyl residue from the N-termini of peptides. This chain is Probable Xaa-Pro aminopeptidase MCYG_06503, found in Arthroderma otae (strain ATCC MYA-4605 / CBS 113480) (Microsporum canis).